We begin with the raw amino-acid sequence, 600 residues long: Prostaglandin G/H synthase 1 (600 aa).

An N-terminal signal peptide occupies residues 1-24 (MSRQGISLRFPLLLLLLSPSPVLP). One can recognise an EGF-like domain in the interval 32–70 (PVNPCCYYPCQHQGICVRFGLDRYQCDCTRTGYYGPNCT). Intrachain disulfides connect C36/C47, C37/C159, C41/C57, and C59/C69. N-linked (GlcNAc...) asparagine glycosylation is found at N68, N104, and N144. H207 (proton acceptor) is an active-site residue. Catalysis depends on Y385, which acts as the For cyclooxygenase activity. H388 contacts heme b. N410 carries an N-linked (GlcNAc...) asparagine glycan. Residues C569 and C575 are joined by a disulfide bond.

The protein belongs to the prostaglandin G/H synthase family. In terms of assembly, homodimer. Heme b is required as a cofactor.

The protein localises to the microsome membrane. Its subcellular location is the endoplasmic reticulum membrane. The enzyme catalyses (5Z,8Z,11Z,14Z)-eicosatetraenoate + AH2 + 2 O2 = prostaglandin H2 + A + H2O. It carries out the reaction (5Z,8Z,11Z,14Z)-eicosatetraenoate + 2 O2 = prostaglandin G2. The catalysed reaction is prostaglandin G2 + AH2 = prostaglandin H2 + A + H2O. It catalyses the reaction (9Z,12Z)-octadecadienoate + AH2 + O2 = (9R)-hydroxy-(10E,12Z)-octadecadienoate + A + H2O. The enzyme catalyses (9Z,12Z)-octadecadienoate + AH2 + O2 = (9S)-hydroxy-(10E,12Z)-octadecadienoate + A + H2O. It carries out the reaction (9Z,12Z)-octadecadienoate + AH2 + O2 = (13S)-hydroxy-(9Z,11E)-octadecadienoate + A + H2O. The catalysed reaction is (9Z,12Z)-octadecadienoate + AH2 + O2 = (13R)-hydroxy-(9Z,11E)-octadecadienoate + A + H2O. Its pathway is lipid metabolism; prostaglandin biosynthesis. With respect to regulation, the cyclooxygenase activity is inhibited by nonsteroidal anti-inflammatory drugs (NSAIDs) including ibuprofen, flurbiprofen, ketoprofen, naproxen, flurbiprofen, anirolac, fenclofenac and diclofenac. Functionally, dual cyclooxygenase and peroxidase that plays an important role in the biosynthesis pathway of prostanoids, a class of C20 oxylipins mainly derived from arachidonate ((5Z,8Z,11Z,14Z)-eicosatetraenoate, AA, C20:4(n-6)), with a particular role in the inflammatory response. The cyclooxygenase activity oxygenates AA to the hydroperoxy endoperoxide prostaglandin G2 (PGG2), and the peroxidase activity reduces PGG2 to the hydroxy endoperoxide prostaglandin H2 (PGH2), the precursor of all 2-series prostaglandins and thromboxanes. This complex transformation is initiated by abstraction of hydrogen at carbon 13 (with S-stereochemistry), followed by insertion of molecular O2 to form the endoperoxide bridge between carbon 9 and 11 that defines prostaglandins. The insertion of a second molecule of O2 (bis-oxygenase activity) yields a hydroperoxy group in PGG2 that is then reduced to PGH2 by two electrons. Involved in the constitutive production of prostanoids in particular in the stomach and platelets. In gastric epithelial cells, it is a key step in the generation of prostaglandins, such as prostaglandin E2 (PGE2), which plays an important role in cytoprotection. In platelets, it is involved in the generation of thromboxane A2 (TXA2), which promotes platelet activation and aggregation, vasoconstriction and proliferation of vascular smooth muscle cells. Can also use linoleate (LA, (9Z,12Z)-octadecadienoate, C18:2(n-6)) as substrate and produce hydroxyoctadecadienoates (HODEs) in a regio- and stereospecific manner, being (9R)-HODE ((9R)-hydroxy-(10E,12Z)-octadecadienoate) and (13S)-HODE ((13S)-hydroxy-(9Z,11E)-octadecadienoate) its major products. The sequence is that of Prostaglandin G/H synthase 1 (PTGS1) from Bos taurus (Bovine).